A 432-amino-acid polypeptide reads, in one-letter code: Serine--tRNA ligase (432 aa).

237–239 contributes to the L-serine binding site; the sequence is TSE. 268–270 is an ATP binding site; the sequence is RSE. Glu-291 lines the L-serine pocket. 355 to 358 lines the ATP pocket; the sequence is EISS. An L-serine-binding site is contributed by Ser-390.

This sequence belongs to the class-II aminoacyl-tRNA synthetase family. Type-1 seryl-tRNA synthetase subfamily. In terms of assembly, homodimer. The tRNA molecule binds across the dimer.

It localises to the cytoplasm. It catalyses the reaction tRNA(Ser) + L-serine + ATP = L-seryl-tRNA(Ser) + AMP + diphosphate + H(+). The catalysed reaction is tRNA(Sec) + L-serine + ATP = L-seryl-tRNA(Sec) + AMP + diphosphate + H(+). It participates in aminoacyl-tRNA biosynthesis; selenocysteinyl-tRNA(Sec) biosynthesis; L-seryl-tRNA(Sec) from L-serine and tRNA(Sec): step 1/1. In terms of biological role, catalyzes the attachment of serine to tRNA(Ser). Is also able to aminoacylate tRNA(Sec) with serine, to form the misacylated tRNA L-seryl-tRNA(Sec), which will be further converted into selenocysteinyl-tRNA(Sec). The polypeptide is Serine--tRNA ligase (Methylobacillus flagellatus (strain ATCC 51484 / DSM 6875 / VKM B-1610 / KT)).